Reading from the N-terminus, the 308-residue chain is MPNYEKVEFQTLDGLTLRGRLFRAEGAGGNRTAAVVITPPYVIVQDVMVSDIAVYFSQQGITALTYDTRSFGESDGQPRCELDLSKQVDDYSDAFTFLASLPSVDPSKIGFWGISFCATVALNAAALDRRSRFVISVGPIVKASDENPYPIDKVHRVLTKALRDRESQLRGNTPFYVESTCEDGSNPTGFGPELGIEAYELVQRIAASGIAPNFSTQLTLQSFAKILRWHPMQDIKWLGETPMMLMIPGDDTVSLPEEQMRLFDMITGPKRVEVAAGKSHFNVLASEGFEGLMDMQVEFIKQTLGLSS.

Residues 50-280 (SDIAVYFSQQ…RVEVAAGKSH (231 aa)) are abhydrolase domain.

Belongs to the polyketide transferase af380 family.

Its pathway is secondary metabolite biosynthesis. Polyketide transferase; part of the cla gene cluster that produces clavatol and ortho-quinone methide. The clavatol biosynthesis cluster cla and the terrestric acid cluster tra are both involved in the production of peniphenones and penilactones. The non-reducing PKS claF is responsible for the formation of clavatol from successive condensations of 3 malonyl-CoA units, presumably with a simple acetyl-CoA starter unit, and 2 methylation steps. The esterase claE probably collaborates with claF by catalyzing the hydrolysis of ACP-bound acyl intermediates to free the ACP from stalled intermediates. The clavatol oxidase claD then converts clavatol to hydroxyclavatol. Spontaneous dehydration of hydroxyclavatol leads to the accumulation of the highly active ortho-quinone methide. On the other hand, the PKS-NRPS hybrid traA is involved in the formation of crustosic acid, with the help of traB and traD. The polyketide synthase module (PKS) of traA is responsible for the synthesis of the polyketide backbone via the condensation of an acetyl-CoA starter unit with 3 malonyl-CoA units. The downstream nonribosomal peptide synthetase (NRPS) module then amidates the carboxyl end of the polyketide with L-malic acid. Because traA lacks a designated enoylreductase (ER) domain, the required activity is provided the enoyl reductase traG. Crustosic acid undergoes decarboxylation and isomerization to the terrestric acid, catalyzed by the 2-oxoglutarate-dependent dioxygenase traH. Both acids are further converted to the 2 gamma-butyrolactones (R)-5-methyltetronic acid and (S)-5-carboxylmethyltetronic acid, with involvement of the cytochrome P450 monooxygenase claJ. Spontaneous addition of the methide to these gamma-butyrolactones leads to peniphenone D and penilactone D, which undergo again stereospecific attacking by methide to give penilactones A and B. The function of the polyketide transferase claH has not been investigated yet. This Penicillium crustosum (Blue mold fungus) protein is Polyketide transferase claH.